A 115-amino-acid chain; its full sequence is Large ribosomal subunit protein uL22 (115 aa).

It belongs to the universal ribosomal protein uL22 family. As to quaternary structure, part of the 50S ribosomal subunit.

This protein binds specifically to 23S rRNA; its binding is stimulated by other ribosomal proteins, e.g. L4, L17, and L20. It is important during the early stages of 50S assembly. It makes multiple contacts with different domains of the 23S rRNA in the assembled 50S subunit and ribosome. In terms of biological role, the globular domain of the protein is located near the polypeptide exit tunnel on the outside of the subunit, while an extended beta-hairpin is found that lines the wall of the exit tunnel in the center of the 70S ribosome. The polypeptide is Large ribosomal subunit protein uL22 (Enterococcus faecalis (strain ATCC 700802 / V583)).